The chain runs to 329 residues: Serine dehydratase-like (329 aa).

M1 bears the N-acetylmethionine mark. The residue at position 48 (K48) is an N6-(pyridoxal phosphate)lysine.

The protein belongs to the serine/threonine dehydratase family. In terms of assembly, monomer. Homodimer. Pyridoxal 5'-phosphate is required as a cofactor. As to expression, abundantly expressed in liver.

It catalyses the reaction L-serine = pyruvate + NH4(+). The catalysed reaction is L-threonine = 2-oxobutanoate + NH4(+). The enzyme catalyses L-glutamate = D-glutamate. Catalyzes the pyridoxal-phosphate-dependent dehydrative deamination of L-threonine and L-serine to ammonia and alpha-ketobutyrate and pyruvate, respectively. Also exhibits racemase activity towards L-glutamate and D-glutamate. This is Serine dehydratase-like (Sdsl) from Mus musculus (Mouse).